A 902-amino-acid polypeptide reads, in one-letter code: Protein translocase subunit SecA (902 aa).

Residues Gln-89, 107–111 (GEGKT), and Asp-502 contribute to the ATP site. Residues Cys-884, Cys-886, Cys-895, and His-896 each contribute to the Zn(2+) site.

This sequence belongs to the SecA family. In terms of assembly, monomer and homodimer. Part of the essential Sec protein translocation apparatus which comprises SecA, SecYEG and auxiliary proteins SecDF-YajC and YidC. Zn(2+) serves as cofactor.

It is found in the cell inner membrane. The protein resides in the cytoplasm. The enzyme catalyses ATP + H2O + cellular proteinSide 1 = ADP + phosphate + cellular proteinSide 2.. In terms of biological role, part of the Sec protein translocase complex. Interacts with the SecYEG preprotein conducting channel. Has a central role in coupling the hydrolysis of ATP to the transfer of proteins into and across the cell membrane, serving both as a receptor for the preprotein-SecB complex and as an ATP-driven molecular motor driving the stepwise translocation of polypeptide chains across the membrane. This chain is Protein translocase subunit SecA, found in Agrobacterium fabrum (strain C58 / ATCC 33970) (Agrobacterium tumefaciens (strain C58)).